The sequence spans 61 residues: Small ribosomal subunit protein uS14 (61 aa).

Zn(2+) is bound by residues C24, C27, C40, and C43.

Belongs to the universal ribosomal protein uS14 family. Zinc-binding uS14 subfamily. As to quaternary structure, part of the 30S ribosomal subunit. Contacts proteins S3 and S10. The cofactor is Zn(2+).

Functionally, binds 16S rRNA, required for the assembly of 30S particles and may also be responsible for determining the conformation of the 16S rRNA at the A site. This is Small ribosomal subunit protein uS14 from Borrelia garinii subsp. bavariensis (strain ATCC BAA-2496 / DSM 23469 / PBi) (Borreliella bavariensis).